Reading from the N-terminus, the 630-residue chain is tRNA uridine 5-carboxymethylaminomethyl modification enzyme MnmG (630 aa).

FAD is bound by residues 14–19, V126, and S181; that span reads GAGHAG. 273–287 is an NAD(+) binding site; sequence GPRYCPSIEDKVVRF. FAD is bound at residue Q370.

Belongs to the MnmG family. As to quaternary structure, homodimer. Heterotetramer of two MnmE and two MnmG subunits. The cofactor is FAD.

The protein localises to the cytoplasm. Its function is as follows. NAD-binding protein involved in the addition of a carboxymethylaminomethyl (cmnm) group at the wobble position (U34) of certain tRNAs, forming tRNA-cmnm(5)s(2)U34. In Alkaliphilus metalliredigens (strain QYMF), this protein is tRNA uridine 5-carboxymethylaminomethyl modification enzyme MnmG.